The following is a 318-amino-acid chain: MNTDNRYHWPHKDLLDVTQLSRADTLHLLDLAASFQEINSRPVKKVPTLKGKTVVLFFVENSTRTKTSFDVAGKRLSADTFALGKSGSSLNKGESLKDTALTLQAMSPDVIVMRHSSSGAARYVADLLPCGVVNGGDGWHAHPTQALLDCFSLREAWANSFEGRTLLILGDIAHSRVARSNIHLLTSLGVRIRVCAPRTLLPAGVDHWPVEVYTDLRQAVRDVDAVMCLRLQLERQQAGLLPDLAEYSRRFCLGLEHMALARPGAGVLHPGPMNRGLEISDDMADAPASLVLDQVAAGVATRMAVLYLLATRNDGGRA.

Positions 64 and 65 each coordinate carbamoyl phosphate. L-aspartate is bound at residue K92. Carbamoyl phosphate contacts are provided by R114, H142, and Q145. L-aspartate-binding residues include R176 and R230. Residues G271 and P272 each contribute to the carbamoyl phosphate site.

This sequence belongs to the aspartate/ornithine carbamoyltransferase superfamily. ATCase family. Heterododecamer (2C3:3R2) of six catalytic PyrB chains organized as two trimers (C3), and six regulatory PyrI chains organized as three dimers (R2).

The catalysed reaction is carbamoyl phosphate + L-aspartate = N-carbamoyl-L-aspartate + phosphate + H(+). It functions in the pathway pyrimidine metabolism; UMP biosynthesis via de novo pathway; (S)-dihydroorotate from bicarbonate: step 2/3. Functionally, catalyzes the condensation of carbamoyl phosphate and aspartate to form carbamoyl aspartate and inorganic phosphate, the committed step in the de novo pyrimidine nucleotide biosynthesis pathway. This chain is Aspartate carbamoyltransferase catalytic subunit, found in Desulfovibrio desulfuricans (strain ATCC 27774 / DSM 6949 / MB).